Reading from the N-terminus, the 47-residue chain is Defensin NsD7 (47 aa).

Intrachain disulfides connect cysteine 3/cysteine 47, cysteine 14/cysteine 34, cysteine 20/cysteine 41, and cysteine 24/cysteine 43. A 1,2-diacyl-sn-glycero-3-phosphate contacts are provided by lysine 4, histidine 33, lysine 36, and arginine 39.

The protein belongs to the DEFL family. In terms of assembly, in the presence of phosphatidic acid (PA), forms right-handed double helices which tend to bundle into fibrils. Each helix is a repetition of dimers containing 2 bound molecules of PA per dimer. Dimers are arranged orthogonally in a tip-to-tip configuration with 1 molecule of PA located at the dimer contact interface. Association of 2 helices to form a double helix depends on intercalating isoleucine residues Ile-15 and Ile-37. Bundling of double helices into fibrils depends on Arg-26.

The protein resides in the vacuole. Plant defense peptide. Disrupts membranes containing phosphatidic acid (PA) via a PA-dependent oligomerization process. The chain is Defensin NsD7 from Nicotiana suaveolens (Australian tobacco).